The sequence spans 377 residues: tRNA-specific 2-thiouridylase MnmA (377 aa).

ATP contacts are provided by residues 9–16 (AMSGGVDS) and Leu35. Cys105 functions as the Nucleophile in the catalytic mechanism. Residues Cys105 and Cys201 are joined by a disulfide bond. Gly129 is an ATP binding site. Residues 151 to 153 (KNQ) form an interaction with tRNA region. Cys201 functions as the Cysteine persulfide intermediate in the catalytic mechanism. The interaction with tRNA stretch occupies residues 307 to 308 (RY).

It belongs to the MnmA/TRMU family.

The protein localises to the cytoplasm. The catalysed reaction is S-sulfanyl-L-cysteinyl-[protein] + uridine(34) in tRNA + AH2 + ATP = 2-thiouridine(34) in tRNA + L-cysteinyl-[protein] + A + AMP + diphosphate + H(+). Functionally, catalyzes the 2-thiolation of uridine at the wobble position (U34) of tRNA, leading to the formation of s(2)U34. The protein is tRNA-specific 2-thiouridylase MnmA of Leptospira borgpetersenii serovar Hardjo-bovis (strain JB197).